The chain runs to 90 residues: Probable Fe(2+)-trafficking protein (90 aa).

This sequence belongs to the Fe(2+)-trafficking protein family.

Its function is as follows. Could be a mediator in iron transactions between iron acquisition and iron-requiring processes, such as synthesis and/or repair of Fe-S clusters in biosynthetic enzymes. This chain is Probable Fe(2+)-trafficking protein, found in Delftia acidovorans (strain DSM 14801 / SPH-1).